A 158-amino-acid polypeptide reads, in one-letter code: Urease accessory protein UreE (158 aa).

This sequence belongs to the UreE family.

Its subcellular location is the cytoplasm. Its function is as follows. Involved in urease metallocenter assembly. Binds nickel. Probably functions as a nickel donor during metallocenter assembly. This Corynebacterium urealyticum (strain ATCC 43042 / DSM 7109) protein is Urease accessory protein UreE.